The chain runs to 212 residues: Transmembrane protein 65 (212 aa).

The Cytoplasmic portion of the chain corresponds to 1–88; the sequence is MIRSVLLRAL…SRLTAAQLRY (88 aa). Residues 89-109 traverse the membrane as a helical segment; that stretch reads ILLHNAIPFIGFGFLDNAIMI. Over 110-116 the chain is Extracellular; it reads AAGTQIE. The chain crosses the membrane as a helical span at residues 117–137; the sequence is LSIGLTLGISTMAAAALGNLV. Residues 138–139 are Cytoplasmic-facing; that stretch reads SD. Residues 140-160 form a helical membrane-spanning segment; the sequence is LAGLGLAGYVEALAVRLGMQI. At 161 to 178 the chain is on the extracellular side; that stretch reads PDLSPRQVDMWQTRVSSH. Residues 179–199 form a helical membrane-spanning segment; it reads MGKAIGVAIGCILGMFPLLFL. Topologically, residues 200 to 212 are cytoplasmic; that stretch reads SDEEDKKPKKDSN.

In terms of assembly, monomer. Homodimer. Interacts with GJA1. Expression is restricted to the heart (at protein level).

It is found in the cell membrane. The protein resides in the mitochondrion inner membrane. Essential for maintaining proper cardiac intercalated disk (ICD) structure and function. May regulate cardiac conduction and the function of the gap junction protein GJA1. May contribute to the stability and proper localization of GJA1 to cardiac intercalated disk thereby regulating gap junction communication. Regulates mitochondrial respiration and mitochondrial DNA copy number maintenance. The protein is Transmembrane protein 65 (tmem65) of Danio rerio (Zebrafish).